Here is a 287-residue protein sequence, read N- to C-terminus: Membrane protein insertase YidC 2 (287 aa).

Residues 1 to 26 (MKKKKRFKQKLLIASLVIGLMAVLSG) form the signal peptide. The N-palmitoyl cysteine moiety is linked to residue Cys27. Cys27 is lipidated: S-diacylglycerol cysteine. A run of 5 helical transmembrane segments spans residues 65-85 (YAVG…PLMI), 135-155 (MMGC…YQAI), 178-198 (YILP…SMMG), 207-224 (AMIV…GITL), and 228-250 (LALY…NNPF).

It belongs to the OXA1/ALB3/YidC family. Type 2 subfamily.

It is found in the cell membrane. In terms of biological role, required for the insertion and/or proper folding and/or complex formation of integral membrane proteins into the membrane. Involved in integration of membrane proteins that insert both dependently and independently of the Sec translocase complex, as well as at least some lipoproteins. In Listeria monocytogenes serovar 1/2a (strain ATCC BAA-679 / EGD-e), this protein is Membrane protein insertase YidC 2.